The sequence spans 419 residues: LanC-like protein 3 homolog (419 aa).

This sequence belongs to the LanC-like protein family.

The protein is LanC-like protein 3 homolog of Drosophila melanogaster (Fruit fly).